Here is a 611-residue protein sequence, read N- to C-terminus: Probable potassium transport system protein Kup (611 aa).

Helical transmembrane passes span 24–44, 55–75, 102–122, 143–163, 175–195, 218–238, 252–272, 275–295, 296–316, 344–364, 374–394, 400–420, and 423–443; these read LVFG…FLFL, VSLI…FLAM, VAVF…ECVI, LIAQ…LFLF, FGPV…ISVA, LLGF…EALF, AWGF…AYLL, TDVI…LYIP, FLLL…SGIF, IYIN…LLIF, YGLA…AIFL, LYMG…LSTV, and ITHG…IVII.

The protein belongs to the HAK/KUP transporter (TC 2.A.72) family.

The protein resides in the cell membrane. The catalysed reaction is K(+)(in) + H(+)(in) = K(+)(out) + H(+)(out). In terms of biological role, transport of potassium into the cell. Likely operates as a K(+):H(+) symporter. The protein is Probable potassium transport system protein Kup of Methanospirillum hungatei JF-1 (strain ATCC 27890 / DSM 864 / NBRC 100397 / JF-1).